We begin with the raw amino-acid sequence, 520 residues long: GMP synthase [glutamine-hydrolyzing] (520 aa).

The 194-residue stretch at 9 to 202 (TVLIVDFGSQ…VHKIAGIKGD (194 aa)) folds into the Glutamine amidotransferase type-1 domain. C86 functions as the Nucleophile in the catalytic mechanism. Active-site residues include H176 and E178. The GMPS ATP-PPase domain occupies 203 to 395 (WTMSAYRAKA…LGLPESFIGR (193 aa)). Residue 230–236 (SGGVDSS) coordinates ATP.

As to quaternary structure, homodimer.

It catalyses the reaction XMP + L-glutamine + ATP + H2O = GMP + L-glutamate + AMP + diphosphate + 2 H(+). It participates in purine metabolism; GMP biosynthesis; GMP from XMP (L-Gln route): step 1/1. Functionally, catalyzes the synthesis of GMP from XMP. In Sinorhizobium fredii (strain NBRC 101917 / NGR234), this protein is GMP synthase [glutamine-hydrolyzing].